The sequence spans 167 residues: Large ribosomal subunit protein uL10 (167 aa).

Belongs to the universal ribosomal protein uL10 family. As to quaternary structure, part of the ribosomal stalk of the 50S ribosomal subunit. The N-terminus interacts with L11 and the large rRNA to form the base of the stalk. The C-terminus forms an elongated spine to which L12 dimers bind in a sequential fashion forming a multimeric L10(L12)X complex.

Its function is as follows. Forms part of the ribosomal stalk, playing a central role in the interaction of the ribosome with GTP-bound translation factors. The polypeptide is Large ribosomal subunit protein uL10 (Tolumonas auensis (strain DSM 9187 / NBRC 110442 / TA 4)).